An 883-amino-acid chain; its full sequence is MADKKTVTPEEKKLVAEKHVDELVQKALVALEEMRKLNQEQVDYIVAKASVAALDAHGELALHAFEETGRGVFEDKATKNLFACEHVVNNMRHTKTVGVIEEDDVTGLTLIAEPVGVVCGITPTTNPTSTAIFKSLISLKTRNPIVFAFHPSAQESSAHAARIVRDAAIAAGAPENCVQWITQPSMEATSALMNHEGVATILATGGNAMVKAAYSCGKPALGVGAGNVPAYVEKSANIRQAAHDIVMSKSFDNGMVCASEQAVIIDKEIYDEFVAEFKSYHTYFVNKKEKALLEEFCFGVKANSKNCAGAKLNADIVGKPATWIAEQAGFTVPEGTNILAAECKEVGENEPLTREKLSPVIAVLKSESREDGITKARQMVEFNGLGHSAAIHTADEELTKEFGKAVKAIRVICNSPSTFGGIGDVYNAFLPSLTLGCGSYGRNSVGDNVSAINLLNIKKVGRRRNNMQWMKLPSKTYFERDSIQYLQKCRDVERVMIVTDHAMVELGFLDRIIEQLDLRRNKVVYQIFADVEPDPDITTVNRGTEIMRAFKPDTIIALGGGSPMDAAKVMWLFYEQPEVDFRDLVQKFMDIRKRAFKFPLLGKKTKFIAIPTTSGTGSEVTPFAVISDKANNRKYPIADYSLTPTVAIVDPALVLTVPGFVAADTGMDVLTHATEAYVSQMASDYTDGLALQAIKLVFENLESSVKNADFHSREKMHNASTIAGMAFANAFLGISHSMAHKIGAQFHTIHGRTNAILLPYVIRYNGTRPAKTATWPKYNYYRADEKYQDIARMLGLPASTPEEGVESYAKAVYELGERIGIQMNFRDQGIDEKEWKEHSRELAFLAYEDQCSPANPRLPMVDHMQEIIEDAYYGYKERPGRRK.

Residues K13 to N456 form an aldehyde dehydrogenase region. NAD(+) contacts are provided by residues I121–N126, G206, and G224. The Nucleophile role is filled by C257. NAD(+) contacts are provided by residues E355, L435, and G438–N443. The segment at I457 to R464 is linker. NAD(+)-binding positions include D500, D534, G561–D565, T612–T613, V625, K634, and L653. Residues D668, H672, H736, and H750 each coordinate Fe cation.

In the N-terminal section; belongs to the aldehyde dehydrogenase family. It in the C-terminal section; belongs to the iron-containing alcohol dehydrogenase family. The cofactor is Fe(2+).

The enzyme catalyses an aldehyde + NAD(+) + H2O = a carboxylate + NADH + 2 H(+). It carries out the reaction ethanol + NAD(+) = acetaldehyde + NADH + H(+). In terms of biological role, has alcohol dehydrogenase activity. Has aldehyde dehydrogenase activity. Plays a role in enhancing virulence in mice, under ethanol stress conditions, perhaps by inducing expression of pneumolysin (Ply) and increasing production of hydrogen peroxide H(2)O(2). May be considered a potential virulence factor. This is Aldehyde-alcohol dehydrogenase from Streptococcus pneumoniae serotype 2 (strain D39 / NCTC 7466).